A 273-amino-acid polypeptide reads, in one-letter code: Kit ligand (273 aa).

A signal peptide spans 1–25 (MKKTQTWIITCIYLQLLLFNPLVKT). At 26–214 (KEICGNPVTD…AKAPEDSGLQ (189 aa)) the chain is on the extracellular side. 2 disulfide bridges follow: Cys-29–Cys-114 and Cys-68–Cys-163. Asn-90, Asn-97, Asn-145, and Asn-195 each carry an N-linked (GlcNAc...) asparagine glycan. A disordered region spans residues 190–210 (ASSLRNDSSSSNRKAAKAPED). Residues 191–202 (SSLRNDSSSSNR) are compositionally biased toward low complexity. A helical transmembrane segment spans residues 215–237 (WTAMALPALISLVIGFAFGALYW). The Cytoplasmic segment spans residues 238 to 273 (KKKQSSLTRAVENIQINEEDNEISMLQQKEREFQEV).

This sequence belongs to the SCF family. Homodimer, non-covalently linked. Heterotetramer with KIT, binding two KIT molecules; thereby mediates KIT dimerization and subsequent activation by autophosphorylation. Post-translationally, a soluble form is produced by proteolytic processing of isoform 1 in the extracellular domain. As to expression, expressed in the cochlea.

It localises to the cell membrane. The protein localises to the cytoplasm. It is found in the cytoskeleton. Its subcellular location is the cell projection. The protein resides in the lamellipodium. It localises to the filopodium. The protein localises to the secreted. Functionally, ligand for the receptor-type protein-tyrosine kinase KIT. Plays an essential role in the regulation of cell survival and proliferation, hematopoiesis, stem cell maintenance, gametogenesis, mast cell development, migration and function, and in melanogenesis. KITLG/SCF binding can activate several signaling pathways. Promotes phosphorylation of PIK3R1, the regulatory subunit of phosphatidylinositol 3-kinase, and subsequent activation of the kinase AKT1. KITLG/SCF and KIT also transmit signals via GRB2 and activation of RAS, RAF1 and the MAP kinases MAPK1/ERK2 and/or MAPK3/ERK1. KITLG/SCF and KIT promote activation of STAT family members STAT1, STAT3 and STAT5. KITLG/SCF and KIT promote activation of PLCG1, leading to the production of the cellular signaling molecules diacylglycerol and inositol 1,4,5-trisphosphate. KITLG/SCF acts synergistically with other cytokines, probably interleukins. The chain is Kit ligand (Kitlg) from Mus musculus (Mouse).